The sequence spans 209 residues: MDRNFLLTVTLICIVVAGVGGQSPISSPTKSPTTPSAPTTSPTKSPAVTSPTTAPAKTPTASASSPVESPKSPAPVSESSPPPTPVPESSPPVPAPMVSSPVSSPPVPAPVADSPPAPVAAPVADVPAPAPSKHKKTTKKSKKHQAAPAPAPELLGPPAPPTESPGPNSDAFSPGPSADDQSGAASTRVLRNVAVGAVATAWAVLVMAF.

The N-terminal stretch at 1 to 21 (MDRNFLLTVTLICIVVAGVGG) is a signal peptide. Positions 21 to 185 (GQSPISSPTK…PSADDQSGAA (165 aa)) are disordered. Residues 23 to 79 (SPISSPTKSPTTPSAPTTSPTKSPAVTSPTTAPAKTPTASASSPVESPKSPAPVSES) are compositionally biased toward low complexity. Pro residues-rich tracts occupy residues 80-95 (SPPPTPVPESSPPVPA) and 103-119 (SSPPVPAPVADSPPAPV). Basic residues predominate over residues 132–145 (SKHKKTTKKSKKHQ). The segment covering 149-164 (APAPELLGPPAPPTES) has biased composition (pro residues). The GPI-anchor amidated glycine moiety is linked to residue G183. A propeptide spans 184–209 (AASTRVLRNVAVGAVATAWAVLVMAF) (removed in mature form).

The protein belongs to the lysine-rich AGP family. O-glycosylated on the hydroxyproline residues. As to expression, predominantly expressed in flowers, and moderately expressed in roots, stems and young leaves.

The protein localises to the cell membrane. Proteoglycan that seems to be implicated in diverse developmental roles such as differentiation, cell-cell recognition, embryogenesis and programmed cell death. The sequence is that of Lysine-rich arabinogalactan protein 18 (AGP18) from Arabidopsis thaliana (Mouse-ear cress).